Reading from the N-terminus, the 141-residue chain is ATP synthase F(0) complex subunit C2, mitochondrial (141 aa).

A mitochondrion-targeting transit peptide spans 1–66 (MFSCFKFIST…RNFQTSAISR (66 aa)). Residues 82 to 102 (VGVAGSGAGIGTVFGSLIIGY) traverse the membrane as a helical segment. N6,N6,N6-trimethyllysine is present on K109. Residues 117–137 (ILGFALSEAMGLFCLMVAFLI) traverse the membrane as a helical segment.

Belongs to the ATPase C chain family. As to quaternary structure, F-type ATPases have 2 components, CF(1) - the catalytic core - and CF(0) - the membrane proton channel. CF(1) has five subunits: alpha(3), beta(3), gamma(1), delta(1), epsilon(1). CF(0) has three main subunits: a, b and c. Interacts with DNAJC30; interaction is direct. In terms of processing, trimethylated by ATPSCKMT at Lys-109. Methylation is required for proper incorporation of the C subunit into the ATP synthase complex and mitochondrial respiration.

Its subcellular location is the mitochondrion membrane. Functionally, mitochondrial membrane ATP synthase (F(1)F(0) ATP synthase or Complex V) produces ATP from ADP in the presence of a proton gradient across the membrane which is generated by electron transport complexes of the respiratory chain. F-type ATPases consist of two structural domains, F(1) - containing the extramembraneous catalytic core and F(0) - containing the membrane proton channel, linked together by a central stalk and a peripheral stalk. During catalysis, ATP synthesis in the catalytic domain of F(1) is coupled via a rotary mechanism of the central stalk subunits to proton translocation. Part of the complex F(0) domain. A homomeric c-ring of probably 10 subunits is part of the complex rotary element. In Pongo abelii (Sumatran orangutan), this protein is ATP synthase F(0) complex subunit C2, mitochondrial.